We begin with the raw amino-acid sequence, 1399 residues long: DNA-directed RNA polymerase subunit beta' (1399 aa).

The Zn(2+) site is built by Cys-70, Cys-72, Cys-85, and Cys-88. Mg(2+)-binding residues include Asp-460, Asp-462, and Asp-464. Zn(2+) contacts are provided by Cys-814, Cys-888, Cys-895, and Cys-898.

This sequence belongs to the RNA polymerase beta' chain family. The RNAP catalytic core consists of 2 alpha, 1 beta, 1 beta' and 1 omega subunit. When a sigma factor is associated with the core the holoenzyme is formed, which can initiate transcription. The cofactor is Mg(2+). Zn(2+) serves as cofactor.

The catalysed reaction is RNA(n) + a ribonucleoside 5'-triphosphate = RNA(n+1) + diphosphate. Its function is as follows. DNA-dependent RNA polymerase catalyzes the transcription of DNA into RNA using the four ribonucleoside triphosphates as substrates. In Pseudomonas fluorescens (strain Pf0-1), this protein is DNA-directed RNA polymerase subunit beta'.